The sequence spans 598 residues: Leucine aminopeptidase 2, chloroplastic (598 aa).

A chloroplast-targeting transit peptide spans 1–71; the sequence is MATAASTSAA…GHRARMGHTA (71 aa). Mn(2+)-binding residues include Lys367 and Asp372. Lys379 is a catalytic residue. Positions 392, 452, and 454 each coordinate Mn(2+). Arg456 is a catalytic residue.

The protein belongs to the peptidase M17 family. In terms of assembly, homohexamer (dimer of homotrimers). The cofactor is Mn(2+).

The protein resides in the plastid. Its subcellular location is the chloroplast. It carries out the reaction Release of an N-terminal amino acid, Xaa-|-Yaa-, in which Xaa is preferably Leu, but may be other amino acids including Pro although not Arg or Lys, and Yaa may be Pro. Amino acid amides and methyl esters are also readily hydrolyzed, but rates on arylamides are exceedingly low.. The catalysed reaction is Release of N-terminal proline from a peptide.. In terms of biological role, presumably involved in the processing and regular turnover of intracellular proteins. Catalyzes the removal of unsubstituted N-terminal amino acids from various peptides. This chain is Leucine aminopeptidase 2, chloroplastic, found in Oryza sativa subsp. japonica (Rice).